The following is a 150-amino-acid chain: uncharacterized protein (150 aa).

This is an uncharacterized protein from Mycoplasma pneumoniae (strain ATCC 29342 / M129 / Subtype 1) (Mycoplasmoides pneumoniae).